A 70-amino-acid polypeptide reads, in one-letter code: UPF0352 protein Sfri_2492 (70 aa).

It belongs to the UPF0352 family.

This chain is UPF0352 protein Sfri_2492, found in Shewanella frigidimarina (strain NCIMB 400).